The primary structure comprises 93 residues: Large ribosomal subunit protein bL27 (93 aa).

Positions 1–10 are excised as a propeptide; it reads MRFLLGLQYF. The disordered stretch occupies residues 14-36; sequence KGVGSTKNGRDSESKRLGAKKSD. Basic and acidic residues predominate over residues 21–36; it reads NGRDSESKRLGAKKSD.

The protein belongs to the bacterial ribosomal protein bL27 family. In terms of processing, the N-terminus is cleaved by ribosomal processing cysteine protease Prp.

The sequence is that of Large ribosomal subunit protein bL27 from Mycoplasma capricolum subsp. capricolum (strain California kid / ATCC 27343 / NCTC 10154).